The following is a 184-amino-acid chain: Ribulose bisphosphate carboxylase small subunit, chloroplastic 2 (184 aa).

A chloroplast-targeting transit peptide spans 1 to 59; the sequence is MASSMMSNAATAVAVAATSGGAQANMVAPFNGLKSIASFPVTRKSNDITSIASNGGRVQ.

Belongs to the RuBisCO small chain family. In terms of assembly, heterohexadecamer of 8 large and 8 small subunits.

The protein resides in the plastid. It is found in the chloroplast. Its function is as follows. RuBisCO catalyzes two reactions: the carboxylation of D-ribulose 1,5-bisphosphate, the primary event in carbon dioxide fixation, as well as the oxidative fragmentation of the pentose substrate. Both reactions occur simultaneously and in competition at the same active site. Although the small subunit is not catalytic it is essential for maximal activity. In Amaranthus hypochondriacus (Prince-of-Wales feather), this protein is Ribulose bisphosphate carboxylase small subunit, chloroplastic 2.